The sequence spans 495 residues: tRNA(Ile)-lysidine synthase (495 aa).

An ATP-binding site is contributed by 26 to 31 (SGGSDS).

The protein belongs to the tRNA(Ile)-lysidine synthase family.

The protein localises to the cytoplasm. It catalyses the reaction cytidine(34) in tRNA(Ile2) + L-lysine + ATP = lysidine(34) in tRNA(Ile2) + AMP + diphosphate + H(+). In terms of biological role, ligates lysine onto the cytidine present at position 34 of the AUA codon-specific tRNA(Ile) that contains the anticodon CAU, in an ATP-dependent manner. Cytidine is converted to lysidine, thus changing the amino acid specificity of the tRNA from methionine to isoleucine. In Bartonella tribocorum (strain CIP 105476 / IBS 506), this protein is tRNA(Ile)-lysidine synthase.